Consider the following 126-residue polypeptide: DNA-directed RNA polymerase 35 kDa subunit (126 aa).

It belongs to the poxviridae DNA-directed RNA polymerase 35 kDa subunit family. The DNA-dependent RNA polymerase used for intermediate and late genes expression consists of eight subunits 147 kDa, 133 kDa, 35 kDa, 30 kDa, 22 kDa, 19 kDa, 18 kDa and 7 kDa totalling more than 500 kDa in mass. The same holoenzyme, with the addition of the transcription-specificity factor RAP94, is used for early gene expression.

It localises to the virion. The enzyme catalyses RNA(n) + a ribonucleoside 5'-triphosphate = RNA(n+1) + diphosphate. Functionally, part of the DNA-dependent RNA polymerase which catalyzes the transcription of viral DNA into RNA using the four ribonucleoside triphosphates as substrates. Responsible for the transcription of early, intermediate and late genes. DNA-dependent RNA polymerase associates with the early transcription factor (ETF) thereby allowing the early genes transcription. Late transcription, and probably also intermediate transcription, require newly synthesized RNA polymerase. The protein is DNA-directed RNA polymerase 35 kDa subunit (RPO35) of Ovis aries (Sheep).